The following is a 90-amino-acid chain: Heat shock protein beta-7 (90 aa).

The region spanning 39–90 (PLTFPARPGGQGNIKTLGDAYEFTVDMRDFSPEDIIVTTSNNHIEVRAEKKP) is the sHSP domain.

This sequence belongs to the small heat shock protein (HSP20) family. In terms of assembly, interacts with C-terminal domain of actin-binding protein 280. In terms of tissue distribution, found in both cardiac and skeletal muscle.

Its subcellular location is the cytoplasm. It localises to the nucleus. The protein localises to the cajal body. The chain is Heat shock protein beta-7 (Hspb7) from Rattus norvegicus (Rat).